The following is a 271-amino-acid chain: Shikimate dehydrogenase (NADP(+)) (271 aa).

Shikimate is bound by residues 14–16 and Thr61; that span reads SLS. The Proton acceptor role is filled by Lys65. The shikimate site is built by Asn86 and Asp101. NADP(+) is bound by residues 125–129 and Ile212; that span reads GAGGA. A shikimate-binding site is contributed by Tyr214. Gly235 provides a ligand contact to NADP(+).

The protein belongs to the shikimate dehydrogenase family. Homodimer.

The enzyme catalyses shikimate + NADP(+) = 3-dehydroshikimate + NADPH + H(+). It functions in the pathway metabolic intermediate biosynthesis; chorismate biosynthesis; chorismate from D-erythrose 4-phosphate and phosphoenolpyruvate: step 4/7. Functionally, involved in the biosynthesis of the chorismate, which leads to the biosynthesis of aromatic amino acids. Catalyzes the reversible NADPH linked reduction of 3-dehydroshikimate (DHSA) to yield shikimate (SA). The chain is Shikimate dehydrogenase (NADP(+)) from Clostridium perfringens (strain ATCC 13124 / DSM 756 / JCM 1290 / NCIMB 6125 / NCTC 8237 / Type A).